The chain runs to 205 residues: Proteasome subunit beta (205 aa).

A propeptide spans 1–8 (MDDKQYKG) (removed in mature form; by autocatalysis). T9 acts as the Nucleophile in catalysis.

The protein belongs to the peptidase T1B family. In terms of assembly, the 20S proteasome core is composed of 14 alpha and 14 beta subunits that assemble into four stacked heptameric rings, resulting in a barrel-shaped structure. The two inner rings, each composed of seven catalytic beta subunits, are sandwiched by two outer rings, each composed of seven alpha subunits. The catalytic chamber with the active sites is on the inside of the barrel. Has a gated structure, the ends of the cylinder being occluded by the N-termini of the alpha-subunits. Is capped at one or both ends by the proteasome regulatory ATPase, PAN.

It is found in the cytoplasm. It catalyses the reaction Cleavage of peptide bonds with very broad specificity.. Its activity is regulated as follows. The formation of the proteasomal ATPase PAN-20S proteasome complex, via the docking of the C-termini of PAN into the intersubunit pockets in the alpha-rings, triggers opening of the gate for substrate entry. Interconversion between the open-gate and close-gate conformations leads to a dynamic regulation of the 20S proteasome proteolysis activity. Its function is as follows. Component of the proteasome core, a large protease complex with broad specificity involved in protein degradation. This chain is Proteasome subunit beta, found in Methanocella paludicola (strain DSM 17711 / JCM 13418 / NBRC 101707 / SANAE).